The sequence spans 467 residues: tRNA(Ile)-lysidine synthase (467 aa).

ATP is bound at residue 26–31 (SGGPDS).

Belongs to the tRNA(Ile)-lysidine synthase family.

The protein resides in the cytoplasm. The enzyme catalyses cytidine(34) in tRNA(Ile2) + L-lysine + ATP = lysidine(34) in tRNA(Ile2) + AMP + diphosphate + H(+). Functionally, ligates lysine onto the cytidine present at position 34 of the AUA codon-specific tRNA(Ile) that contains the anticodon CAU, in an ATP-dependent manner. Cytidine is converted to lysidine, thus changing the amino acid specificity of the tRNA from methionine to isoleucine. This Clostridium tetani (strain Massachusetts / E88) protein is tRNA(Ile)-lysidine synthase.